Here is a 202-residue protein sequence, read N- to C-terminus: CASP-like protein 2B1 (202 aa).

Residues 1–29 (MSYLGVGVSPGNVPVYHGTNLKVVDRRVR) lie on the Cytoplasmic side of the membrane. Residues 30 to 50 (LAELVLRCVICGLGILAAVLV) traverse the membrane as a helical segment. Residues 51 to 72 (GTDTQVKVIFTIQKKAKFTDMK) are Extracellular-facing. The chain crosses the membrane as a helical span at residues 73–93 (ALVFLVIANGIAAAYSLIQGL). Topologically, residues 94-109 (RCVVSMVRGSVLFSKP) are cytoplasmic. A helical membrane pass occupies residues 110-130 (LAWAIFSGDQVIAYLTLAAVA). Residues 131–164 (AAAQSSVFGEFGQPELQWMKICNMYGKFCNQVGE) are Extracellular-facing. The chain crosses the membrane as a helical span at residues 165 to 185 (GIVSAVGVSLSMVILSGISAF). Residues 186–202 (SLFRLYGGNKGTSGGRW) lie on the Cytoplasmic side of the membrane.

The protein belongs to the Casparian strip membrane proteins (CASP) family. In terms of assembly, homodimer and heterodimers.

Its subcellular location is the cell membrane. In Vitis vinifera (Grape), this protein is CASP-like protein 2B1.